The following is a 714-amino-acid chain: Transcription activator of gluconeogenesis UREG_00958 (714 aa).

Residues 1 to 71 (MTSNARNGPL…NAKDPLRPRR (71 aa)) form a disordered region. A compositionally biased stretch (polar residues) spans 38–62 (ESQTQVENSSTKQPNGQTKPMSASN). The segment at residues 78–106 (CFACQRAHLTCGDERPCQRCIKRGIQNSC) is a DNA-binding region (zn(2)-C6 fungal-type). 3 disordered regions span residues 176-228 (SLSQ…NASG), 274-312 (GAGD…TAQP), and 539-567 (NTGG…VNPS). The span at 191–228 (FPSQSPVSPTFSITANSATSGNQNMPSSLPASNGNASG) shows a compositional bias: polar residues. Residues 545–555 (GSTSGTSSRGS) are compositionally biased toward low complexity.

It belongs to the ERT1/acuK family.

It localises to the nucleus. Functionally, transcription factor which regulates nonfermentable carbon utilization. Activator of gluconeogenetic genes. The protein is Transcription activator of gluconeogenesis UREG_00958 of Uncinocarpus reesii (strain UAMH 1704).